A 235-amino-acid polypeptide reads, in one-letter code: MEGWQRAFVLHSRPWSETSLMLDVFTEESGRVRLVAKGARSKRSNLKGALQPFTPLLVRFGGRGEVKTLRSAEAVSLALPLSGITLYSGLYVNELISRVLEHETRFSELFFDYLHCIQALAGATDSPEPALRRFELALLGHLGYGVDFLHCAGSGDSVDDTMTYRYREEKGFIASIVIDNTTFTGRHLRALSEREFPDQDTLRAAKRFTRIALKPYLGGKPLKSRELFRQFVPKR.

This sequence belongs to the RecO family.

Its function is as follows. Involved in DNA repair and RecF pathway recombination. In Enterobacter sp. (strain 638), this protein is DNA repair protein RecO.